The sequence spans 297 residues: tRNA-cytidine(32) 2-sulfurtransferase (297 aa).

A PP-loop motif motif is present at residues 61-66; that stretch reads SGGKDS. Residues C136, C139, and C227 each contribute to the [4Fe-4S] cluster site.

Belongs to the TtcA family. As to quaternary structure, homodimer. The cofactor is Mg(2+). [4Fe-4S] cluster is required as a cofactor.

It localises to the cytoplasm. It catalyses the reaction cytidine(32) in tRNA + S-sulfanyl-L-cysteinyl-[cysteine desulfurase] + AH2 + ATP = 2-thiocytidine(32) in tRNA + L-cysteinyl-[cysteine desulfurase] + A + AMP + diphosphate + H(+). The protein operates within tRNA modification. Its function is as follows. Catalyzes the ATP-dependent 2-thiolation of cytidine in position 32 of tRNA, to form 2-thiocytidine (s(2)C32). The sulfur atoms are provided by the cysteine/cysteine desulfurase (IscS) system. This chain is tRNA-cytidine(32) 2-sulfurtransferase, found in Paracoccus denitrificans (strain Pd 1222).